A 441-amino-acid polypeptide reads, in one-letter code: Endoglucanase E-2 (441 aa).

The segment at residues 1 to 31 (MSPRPLRALLGAAAAALVSAAALAFPSQAAA) is a signal peptide (tat-type signal). The catalytic stretch occupies residues 32-320 (NDSPFYVNPN…YEMAIAAGGT (289 aa)). Aspartate 110 is a catalytic residue. 2 cysteine pairs are disulfide-bonded: cysteine 111–cysteine 156 and cysteine 263–cysteine 298. The Proton donor role is filled by aspartate 148. Residue aspartate 296 is the Nucleophile of the active site. Residues 317–343 (AGGTNPNPNPNPTPTPTPTPTPPPGSS) form a disordered region. The interval 321 to 340 (NPNPNPNPTPTPTPTPTPPP) is linker. Pro residues predominate over residues 323–341 (NPNPNPTPTPTPTPTPPPG). One can recognise a CBM2 domain in the interval 339-441 (PPGSSGACTA…SVPTLTCAAS (103 aa)). Cysteine 346 and cysteine 438 are oxidised to a cystine.

This sequence belongs to the glycosyl hydrolase 6 (cellulase B) family. In terms of assembly, homodimer. In terms of processing, predicted to be exported by the Tat system. The position of the signal peptide cleavage has been experimentally proven.

It carries out the reaction Endohydrolysis of (1-&gt;4)-beta-D-glucosidic linkages in cellulose, lichenin and cereal beta-D-glucans.. Its pathway is glycan metabolism; cellulose degradation. The protein is Endoglucanase E-2 (celB) of Thermobifida fusca (Thermomonospora fusca).